The sequence spans 239 residues: Putative ABC transporter ATP-binding protein AlbC (239 aa).

Positions 4-238 constitute an ABC transporter domain; sequence LDIHDVSVWY…RREFFEVIGH (235 aa). Residue 37-44 participates in ATP binding; it reads GVNGAGKT.

Belongs to the ABC transporter superfamily.

Involved in the production of the bacteriocin subtilosin. Required for immunity to subtilosin. This chain is Putative ABC transporter ATP-binding protein AlbC (albC), found in Bacillus subtilis (strain 168).